Reading from the N-terminus, the 218-residue chain is Histidine biosynthesis bifunctional protein HisIE (218 aa).

The interval 1–131 is phosphoribosyl-AMP cyclohydrolase; that stretch reads MAPHQFKSKG…GDYDLPPADT (131 aa). Residues 132–218 form a phosphoribosyl-ATP pyrophosphohydrolase region; it reads LSQVFRVVEE…VYRALQQRRR (87 aa).

In the N-terminal section; belongs to the PRA-CH family. This sequence in the C-terminal section; belongs to the PRA-PH family.

The protein localises to the cytoplasm. It carries out the reaction 1-(5-phospho-beta-D-ribosyl)-ATP + H2O = 1-(5-phospho-beta-D-ribosyl)-5'-AMP + diphosphate + H(+). The enzyme catalyses 1-(5-phospho-beta-D-ribosyl)-5'-AMP + H2O = 1-(5-phospho-beta-D-ribosyl)-5-[(5-phospho-beta-D-ribosylamino)methylideneamino]imidazole-4-carboxamide. It functions in the pathway amino-acid biosynthesis; L-histidine biosynthesis; L-histidine from 5-phospho-alpha-D-ribose 1-diphosphate: step 2/9. It participates in amino-acid biosynthesis; L-histidine biosynthesis; L-histidine from 5-phospho-alpha-D-ribose 1-diphosphate: step 3/9. This is Histidine biosynthesis bifunctional protein HisIE from Gloeobacter violaceus (strain ATCC 29082 / PCC 7421).